A 319-amino-acid polypeptide reads, in one-letter code: Tyrosine phosphatase-like protein N3 (319 aa).

The Tyrosine-protein phosphatase domain maps to 7 to 285; that stretch reads SNLSIHEFWR…LIINKILLHS (279 aa).

Belongs to the protein-tyrosine phosphatase family.

The chain is Tyrosine phosphatase-like protein N3 (N7) from Microplitis demolitor bracovirus (isolate Webb) (MdBV).